We begin with the raw amino-acid sequence, 483 residues long: Probable cytosol aminopeptidase (483 aa).

Residues Lys-252 and Asp-257 each coordinate Mn(2+). Lys-264 is an active-site residue. Asp-275, Asp-334, and Glu-336 together coordinate Mn(2+). Residue Arg-338 is part of the active site.

The protein belongs to the peptidase M17 family. The cofactor is Mn(2+).

The protein resides in the cytoplasm. It carries out the reaction Release of an N-terminal amino acid, Xaa-|-Yaa-, in which Xaa is preferably Leu, but may be other amino acids including Pro although not Arg or Lys, and Yaa may be Pro. Amino acid amides and methyl esters are also readily hydrolyzed, but rates on arylamides are exceedingly low.. The catalysed reaction is Release of an N-terminal amino acid, preferentially leucine, but not glutamic or aspartic acids.. Its function is as follows. Presumably involved in the processing and regular turnover of intracellular proteins. Catalyzes the removal of unsubstituted N-terminal amino acids from various peptides. The chain is Probable cytosol aminopeptidase from Legionella pneumophila (strain Paris).